A 147-amino-acid polypeptide reads, in one-letter code: uncharacterized protein (147 aa).

This is an uncharacterized protein from Aedes vexans (Inland floodwater mosquito).